Consider the following 1138-residue polypeptide: Tyrosine-protein kinase receptor Tie-1 (1138 aa).

The N-terminal stretch at 1–21 is a signal peptide; sequence MVWRVPPFLLPILFLASHVGA. The Extracellular portion of the chain corresponds to 22–759; the sequence is AVDLTLLANL…SRAAEEGLDQ (738 aa). The Ig-like C2-type 1 domain maps to 43 to 105; sequence CVSGEAGAGR…PSDLVGVFSC (63 aa). Residues asparagine 83 and asparagine 161 are each glycosylated (N-linked (GlcNAc...) asparagine). 3 consecutive EGF-like domains span residues 214–256, 258–303, and 305–345; these read GCGA…TRCE, ACRE…SQCQ, and ACAP…VHCE. Intrachain disulfides connect cysteine 228/cysteine 237, cysteine 231/cysteine 244, and cysteine 246/cysteine 255. Cystine bridges form between cysteine 315–cysteine 327, cysteine 321–cysteine 333, and cysteine 335–cysteine 344. An Ig-like C2-type 2 domain is found at 372-426; sequence CAAAGNPFPVRGSIELRKPDGTVLLSTKAIVEPEKTTAEFEVPRLVLADSGFWEC. Fibronectin type-III domains are found at residues 446 to 545, 548 to 642, and 646 to 739; these read PPVP…CPEP, QPWL…LPPS, and APRH…TLGN. Residues asparagine 503, asparagine 596, and asparagine 709 are each glycosylated (N-linked (GlcNAc...) asparagine). The chain crosses the membrane as a helical span at residues 760–784; the sequence is QLILAVVGSVSATCLTILAALLTLV. At 785 to 1138 the chain is on the cytoplasmic side; that stretch reads CIRRSCLHRR…AGIDATAEEA (354 aa). A Protein kinase domain is found at 839-1118; the sequence is ITFEDLIGEG…RMLEARKAYV (280 aa). ATP-binding positions include 845 to 853 and lysine 870; that span reads IGEGNFGQV. The Proton acceptor role is filled by aspartate 979. Position 1007 is a phosphotyrosine; by autocatalysis (tyrosine 1007).

This sequence belongs to the protein kinase superfamily. Tyr protein kinase family. Tie subfamily. Heterodimer with TEK/TIE2. Interacts with SVEP1 (via C-terminus). In terms of processing, phosphorylated on tyrosine residues in response to ANGPT1, most likely by TEK/TIE2. Specifically expressed in developing vascular endothelial cells.

It localises to the cell membrane. The catalysed reaction is L-tyrosyl-[protein] + ATP = O-phospho-L-tyrosyl-[protein] + ADP + H(+). Functionally, transmembrane tyrosine-protein kinase that may modulate TEK/TIE2 activity and contribute to the regulation of angiogenesis. The protein is Tyrosine-protein kinase receptor Tie-1 (TIE1) of Homo sapiens (Human).